Consider the following 207-residue polypeptide: Thiamine-phosphate synthase (207 aa).

Residues 36-40 (QLRLK) and Asn-68 contribute to the 4-amino-2-methyl-5-(diphosphooxymethyl)pyrimidine site. The Mg(2+) site is built by Asp-69 and Asp-88. Thr-107 lines the 4-amino-2-methyl-5-(diphosphooxymethyl)pyrimidine pocket. 134 to 136 (TGT) is a binding site for 2-[(2R,5Z)-2-carboxy-4-methylthiazol-5(2H)-ylidene]ethyl phosphate. Lys-137 serves as a coordination point for 4-amino-2-methyl-5-(diphosphooxymethyl)pyrimidine. A 2-[(2R,5Z)-2-carboxy-4-methylthiazol-5(2H)-ylidene]ethyl phosphate-binding site is contributed by Gly-164.

It belongs to the thiamine-phosphate synthase family. Mg(2+) is required as a cofactor.

It catalyses the reaction 2-[(2R,5Z)-2-carboxy-4-methylthiazol-5(2H)-ylidene]ethyl phosphate + 4-amino-2-methyl-5-(diphosphooxymethyl)pyrimidine + 2 H(+) = thiamine phosphate + CO2 + diphosphate. It carries out the reaction 2-(2-carboxy-4-methylthiazol-5-yl)ethyl phosphate + 4-amino-2-methyl-5-(diphosphooxymethyl)pyrimidine + 2 H(+) = thiamine phosphate + CO2 + diphosphate. The catalysed reaction is 4-methyl-5-(2-phosphooxyethyl)-thiazole + 4-amino-2-methyl-5-(diphosphooxymethyl)pyrimidine + H(+) = thiamine phosphate + diphosphate. Its pathway is cofactor biosynthesis; thiamine diphosphate biosynthesis; thiamine phosphate from 4-amino-2-methyl-5-diphosphomethylpyrimidine and 4-methyl-5-(2-phosphoethyl)-thiazole: step 1/1. Condenses 4-methyl-5-(beta-hydroxyethyl)thiazole monophosphate (THZ-P) and 2-methyl-4-amino-5-hydroxymethyl pyrimidine pyrophosphate (HMP-PP) to form thiamine monophosphate (TMP). The chain is Thiamine-phosphate synthase from Rhodospirillum centenum (strain ATCC 51521 / SW).